The following is a 143-amino-acid chain: Large ribosomal subunit protein uL11 (143 aa).

This sequence belongs to the universal ribosomal protein uL11 family. Part of the ribosomal stalk of the 50S ribosomal subunit. Interacts with L10 and the large rRNA to form the base of the stalk. L10 forms an elongated spine to which L12 dimers bind in a sequential fashion forming a multimeric L10(L12)X complex. One or more lysine residues are methylated.

Forms part of the ribosomal stalk which helps the ribosome interact with GTP-bound translation factors. This Borrelia garinii subsp. bavariensis (strain ATCC BAA-2496 / DSM 23469 / PBi) (Borreliella bavariensis) protein is Large ribosomal subunit protein uL11.